The following is a 774-amino-acid chain: Beta-xylosidase/alpha-L-arabinofuranosidase 2 (774 aa).

Positions 1–33 (MASVENRTPNVSVFLCFFVLFATLLLSGGRVSS) are cleaved as a signal peptide. Asn136 carries an N-linked (GlcNAc...) asparagine glycan. Asp303 is an active-site residue. The N-linked (GlcNAc...) asparagine glycan is linked to Asn437.

Belongs to the glycoside hydrolase 3 family.

It is found in the secreted. The protein resides in the extracellular space. The protein localises to the extracellular matrix. The enzyme catalyses Hydrolysis of (1-&gt;4)-beta-D-xylans, to remove successive D-xylose residues from the non-reducing termini.. It carries out the reaction Hydrolysis of terminal non-reducing alpha-L-arabinofuranoside residues in alpha-L-arabinosides.. Functionally, a bifunctional beta-xylosidase/alpha-L-arabinosidase, exo-enzyme that acts synergistically with endohydrolases. Releases xylose and arabinose from cell walls. This is Beta-xylosidase/alpha-L-arabinofuranosidase 2 from Medicago sativa subsp. varia (Alfalfa).